Consider the following 150-residue polypeptide: UPF0506 protein SJCHGC02381 (150 aa).

Positions 1–18 are cleaved as a signal peptide; it reads MNTCIQLLILCLVTVINS. Residues Asn-20, Asn-24, Asn-32, Asn-36, Asn-48, Asn-52, Asn-64, and Asn-110 are each glycosylated (N-linked (GlcNAc...) asparagine). Residues 22–49 form a disordered region; it reads TDNSTENTIKNETENATETELPETFENE. Over residues 36-49 the composition is skewed to acidic residues; it reads NATETELPETFENE. Disulfide bonds link Cys-116–Cys-130, Cys-123–Cys-134, and Cys-129–Cys-139.

It belongs to the UPF0506 family.

The protein resides in the secreted. In Schistosoma japonicum (Blood fluke), this protein is UPF0506 protein SJCHGC02381.